The following is a 361-amino-acid chain: 1D-myo-inositol 2-acetamido-2-deoxy-alpha-D-glucopyranoside deacetylase (361 aa).

The segment covering 1-12 (MTTTPQPPPQPD) has biased composition (pro residues). The disordered stretch occupies residues 1–27 (MTTTPQPPPQPDETPEGAAGAATAGRD). Over residues 16-25 (EGAAGAATAG) the composition is skewed to low complexity. Zn(2+)-binding residues include His66, Asp69, and His207.

This sequence belongs to the MshB deacetylase family. Zn(2+) serves as cofactor.

It catalyses the reaction 1D-myo-inositol 2-acetamido-2-deoxy-alpha-D-glucopyranoside + H2O = 1D-myo-inositol 2-amino-2-deoxy-alpha-D-glucopyranoside + acetate. In terms of biological role, catalyzes the deacetylation of 1D-myo-inositol 2-acetamido-2-deoxy-alpha-D-glucopyranoside (GlcNAc-Ins) in the mycothiol biosynthesis pathway. This Kineococcus radiotolerans (strain ATCC BAA-149 / DSM 14245 / SRS30216) protein is 1D-myo-inositol 2-acetamido-2-deoxy-alpha-D-glucopyranoside deacetylase.